The sequence spans 100 residues: Large ribosomal subunit protein uL23 (100 aa).

The protein belongs to the universal ribosomal protein uL23 family. In terms of assembly, part of the 50S ribosomal subunit. Contacts protein L29, and trigger factor when it is bound to the ribosome.

Its function is as follows. One of the early assembly proteins it binds 23S rRNA. One of the proteins that surrounds the polypeptide exit tunnel on the outside of the ribosome. Forms the main docking site for trigger factor binding to the ribosome. This is Large ribosomal subunit protein uL23 from Baumannia cicadellinicola subsp. Homalodisca coagulata.